Consider the following 130-residue polypeptide: Small ribosomal subunit protein uS9 (130 aa).

The disordered stretch occupies residues 109-130; it reads RVKERKKPGLKKARKARQFSKR. Basic residues predominate over residues 111–130; sequence KERKKPGLKKARKARQFSKR.

The protein belongs to the universal ribosomal protein uS9 family.

This Mycoplasma mobile (strain ATCC 43663 / 163K / NCTC 11711) (Mesomycoplasma mobile) protein is Small ribosomal subunit protein uS9.